The chain runs to 94 residues: Ribonuclease P protein component 1 (94 aa).

The protein belongs to the eukaryotic/archaeal RNase P protein component 1 family. In terms of assembly, consists of a catalytic RNA component and at least 4-5 protein subunits.

It localises to the cytoplasm. The enzyme catalyses Endonucleolytic cleavage of RNA, removing 5'-extranucleotides from tRNA precursor.. Part of ribonuclease P, a protein complex that generates mature tRNA molecules by cleaving their 5'-ends. The protein is Ribonuclease P protein component 1 of Thermofilum pendens (strain DSM 2475 / Hrk 5).